A 311-amino-acid polypeptide reads, in one-letter code: Bifunctional protein FolD (311 aa).

Residues 180–182 (GRS), S209, and I250 contribute to the NADP(+) site.

This sequence belongs to the tetrahydrofolate dehydrogenase/cyclohydrolase family. As to quaternary structure, homodimer.

The enzyme catalyses (6R)-5,10-methylene-5,6,7,8-tetrahydrofolate + NADP(+) = (6R)-5,10-methenyltetrahydrofolate + NADPH. The catalysed reaction is (6R)-5,10-methenyltetrahydrofolate + H2O = (6R)-10-formyltetrahydrofolate + H(+). It participates in one-carbon metabolism; tetrahydrofolate interconversion. Its function is as follows. Catalyzes the oxidation of 5,10-methylenetetrahydrofolate to 5,10-methenyltetrahydrofolate and then the hydrolysis of 5,10-methenyltetrahydrofolate to 10-formyltetrahydrofolate. In Haloquadratum walsbyi (strain DSM 16790 / HBSQ001), this protein is Bifunctional protein FolD.